The sequence spans 74 residues: High-potential iron-sulfur protein isozyme 2 (74 aa).

[4Fe-4S] cluster is bound by residues cysteine 36, cysteine 39, cysteine 53, and cysteine 67.

In terms of assembly, homodimer.

Functionally, specific class of high-redox-potential 4Fe-4S ferredoxins. Functions in anaerobic electron transport in most purple and in some other photosynthetic bacteria and in at least one genus (Paracoccus) of halophilic, denitrifying bacteria. This chain is High-potential iron-sulfur protein isozyme 2, found in Ectothiorhodospira mobilis.